Reading from the N-terminus, the 210-residue chain is Uridine kinase (210 aa).

14–21 (GGSGSGKT) lines the ATP pocket.

This sequence belongs to the uridine kinase family.

It is found in the cytoplasm. It catalyses the reaction uridine + ATP = UMP + ADP + H(+). The enzyme catalyses cytidine + ATP = CMP + ADP + H(+). Its pathway is pyrimidine metabolism; CTP biosynthesis via salvage pathway; CTP from cytidine: step 1/3. The protein operates within pyrimidine metabolism; UMP biosynthesis via salvage pathway; UMP from uridine: step 1/1. The protein is Uridine kinase of Deinococcus radiodurans (strain ATCC 13939 / DSM 20539 / JCM 16871 / CCUG 27074 / LMG 4051 / NBRC 15346 / NCIMB 9279 / VKM B-1422 / R1).